Consider the following 325-residue polypeptide: Elongation factor P--(R)-beta-lysine ligase (325 aa).

Residue 76 to 78 (SPE) coordinates substrate. ATP is bound by residues 100 to 102 (RNE) and N109. Residue Y118 coordinates substrate. 244–245 (EL) contributes to the ATP binding site. Residue E251 participates in substrate binding. An ATP-binding site is contributed by G300.

It belongs to the class-II aminoacyl-tRNA synthetase family. EpmA subfamily. In terms of assembly, homodimer.

The catalysed reaction is D-beta-lysine + L-lysyl-[protein] + ATP = N(6)-((3R)-3,6-diaminohexanoyl)-L-lysyl-[protein] + AMP + diphosphate + H(+). With EpmB is involved in the beta-lysylation step of the post-translational modification of translation elongation factor P (EF-P). Catalyzes the ATP-dependent activation of (R)-beta-lysine produced by EpmB, forming a lysyl-adenylate, from which the beta-lysyl moiety is then transferred to the epsilon-amino group of a conserved specific lysine residue in EF-P. The chain is Elongation factor P--(R)-beta-lysine ligase from Pectobacterium carotovorum subsp. carotovorum (strain PC1).